A 434-amino-acid polypeptide reads, in one-letter code: Putative ankyrin repeat protein FPV219 (434 aa).

ANK repeat units follow at residues 33 to 62 (DDLSPLHHAVSRGYKEIVISMLEHGADVNL), 66 to 95 (EVCSPLHIAIKNDNVEMVQLLIDNGADTDC), 101 to 131 (HGTPLQCAILNENYRITDALLESGADTHEIY), 132 to 161 (TKNHPIIEAIKLDNLPLVRLLLRHGADVNT), 165 to 195 (LYGYPIHLAIRYGNIDIIKELLYHGVIESYS), 196 to 225 (LYPSLLHQSIMCNNKEVVLLLISMGFDVNA), and 229 to 258 (EGNTPMHLAVQKNLVGIVKILLDKGADTSI).

The chain is Putative ankyrin repeat protein FPV219 from Fowlpox virus (strain NVSL) (FPV).